A 231-amino-acid polypeptide reads, in one-letter code: 2-C-methyl-D-erythritol 4-phosphate cytidylyltransferase (231 aa).

The protein belongs to the IspD/TarI cytidylyltransferase family. IspD subfamily.

It catalyses the reaction 2-C-methyl-D-erythritol 4-phosphate + CTP + H(+) = 4-CDP-2-C-methyl-D-erythritol + diphosphate. The protein operates within isoprenoid biosynthesis; isopentenyl diphosphate biosynthesis via DXP pathway; isopentenyl diphosphate from 1-deoxy-D-xylulose 5-phosphate: step 2/6. Its function is as follows. Catalyzes the formation of 4-diphosphocytidyl-2-C-methyl-D-erythritol from CTP and 2-C-methyl-D-erythritol 4-phosphate (MEP). This is 2-C-methyl-D-erythritol 4-phosphate cytidylyltransferase from Pseudoalteromonas atlantica (strain T6c / ATCC BAA-1087).